The sequence spans 258 residues: Thiazole synthase (258 aa).

The active-site Schiff-base intermediate with DXP is the Lys-100. Residues Gly-161, 187-188, and 209-210 each bind 1-deoxy-D-xylulose 5-phosphate; these read AG and NT.

It belongs to the ThiG family. As to quaternary structure, homotetramer. Forms heterodimers with either ThiH or ThiS.

Its subcellular location is the cytoplasm. The enzyme catalyses [ThiS sulfur-carrier protein]-C-terminal-Gly-aminoethanethioate + 2-iminoacetate + 1-deoxy-D-xylulose 5-phosphate = [ThiS sulfur-carrier protein]-C-terminal Gly-Gly + 2-[(2R,5Z)-2-carboxy-4-methylthiazol-5(2H)-ylidene]ethyl phosphate + 2 H2O + H(+). It participates in cofactor biosynthesis; thiamine diphosphate biosynthesis. In terms of biological role, catalyzes the rearrangement of 1-deoxy-D-xylulose 5-phosphate (DXP) to produce the thiazole phosphate moiety of thiamine. Sulfur is provided by the thiocarboxylate moiety of the carrier protein ThiS. In vitro, sulfur can be provided by H(2)S. The polypeptide is Thiazole synthase (Campylobacter jejuni (strain RM1221)).